We begin with the raw amino-acid sequence, 100 residues long: EKC/KEOPS complex subunit GON7 (100 aa).

N-acetylmethionine is present on methionine 1. The tract at residues 50-100 is disordered; sequence SPVQGEAQDRVAAAPEEALDGDDEDDAEDENNIDNRTNSDGPTAKRPKPPS. Over residues 66–81 the composition is skewed to acidic residues; the sequence is EALDGDDEDDAEDENN.

As to quaternary structure, component of the EKC/KEOPS complex composed of at least GON7, TP53RK, TPRKB, OSGEP and LAGE3; the whole complex dimerizes.

Its subcellular location is the nucleus. Component of the EKC/KEOPS complex that is required for the formation of a threonylcarbamoyl group on adenosine at position 37 (t(6)A37) in tRNAs that read codons beginning with adenine. The complex is probably involved in the transfer of the threonylcarbamoyl moiety of threonylcarbamoyl-AMP (TC-AMP) to the N6 group of A37. GON7 plays a supporting role to the catalytic subunit OSGEP in the complex. The protein is EKC/KEOPS complex subunit GON7 of Sus scrofa (Pig).